A 39-amino-acid chain; its full sequence is Natriuretic peptide CnNP-b (39 aa).

Residues 1 to 8 constitute a propeptide that is removed on maturation; the sequence is SGSKTATK. The cysteines at positions 12 and 28 are disulfide-linked. The tract at residues 20 to 39 is disordered; sequence IGSTSGMGCGGVPKPTPGGS.

This sequence belongs to the natriuretic peptide family. In terms of tissue distribution, expressed by the venom gland.

The protein localises to the secreted. Snake venom natriuretic peptide that targets both NPR1 and NPR2. Exhibits hypotensive and vasodepressor activities. This Cryptophis nigrescens (Eastern small-eyed snake) protein is Natriuretic peptide CnNP-b.